We begin with the raw amino-acid sequence, 252 residues long: Ribosomal RNA small subunit methyltransferase J (252 aa).

Residues 105-106 (RD), 121-122 (ER), and aspartate 175 each bind S-adenosyl-L-methionine.

It belongs to the methyltransferase superfamily. RsmJ family.

It is found in the cytoplasm. The enzyme catalyses guanosine(1516) in 16S rRNA + S-adenosyl-L-methionine = N(2)-methylguanosine(1516) in 16S rRNA + S-adenosyl-L-homocysteine + H(+). Specifically methylates the guanosine in position 1516 of 16S rRNA. The sequence is that of Ribosomal RNA small subunit methyltransferase J from Pasteurella multocida (strain Pm70).